A 578-amino-acid chain; its full sequence is Acyl-CoA synthetase ACTT5 (578 aa).

211–222 (RLTTSGTTGLPK) is an AMP binding site. Residues 472–551 (ELEAALLQAK…DEIPRSPTGK (80 aa)) are AMP-binding.

Belongs to the ATP-dependent AMP-binding enzyme family.

It functions in the pathway mycotoxin biosynthesis. Functionally, acyl-CoA synthetase; part of the gene clusters that mediate the biosynthesis of the host-selective toxins (HSTs) ACT-toxins responsible for brown spot of tangerine disease by the tangerine pathotype which affects tangerines and mandarins. ACT-toxins consist of three moieties, 9,10-epoxy-8-hydroxy-9-methyl-decatrienoic acid (EDA), valine and a polyketide. ACT-toxin I is toxic to both citrus and pear; toxin II the 5''-deoxy derivative of ACT-toxin I, is highly toxic to pear and slightly toxic to citrus. On cellular level, ACT-toxins affect plasma membrane of susceptible cells and cause a sudden increase in loss of K(+) after a few minutes of toxin treatment. The acyl-CoA ligase ACTT1, the hydrolase ACTT2, the enoyl-CoA hydratases ACTT3 and ACTT6, and the acyl-CoA synthetase ACTT5 are all involved in the biosynthesis of the AK-, AF- and ACT-toxin common 9,10-epoxy-8-hydroxy-9-methyl-decatrienoic acid (EDA) structural moiety. The exact role of each enzyme, and of additional enzymes identified within the AF-toxin clusters have still to be determined. On the other hand, ACTTS1 to ACTTS4 are specific to the tangerine pathotype. The function of ACTTS3 is to elongate the polyketide chain portion of ACT-toxin that is unique to this toxin. The enoyl-reductase ACTTS2 might complement the missing enoyl-reductase (ER) domain in ACTTS3 in the synthesis of the polyketide portion of ACT-toxin. The roles of the nonribosomal peptide synthetases-related proteins ACTTS1 and ACTTS4 have also still not been elucidated. The sequence is that of Acyl-CoA synthetase ACTT5 from Alternaria alternata (Alternaria rot fungus).